A 277-amino-acid chain; its full sequence is MAIRSYRAYTPGTRHRSVSTFEEISKYKPKKRLTLNKHSKKGRNNRGIITSRHRGGGHKRIYREIDFRRNNNDAPGKIATIEYDPNRNSYICIVNYENGDKRYILHPKGLNVGDLIFSGTEAPISNGNTIPLTKIPVGTFIHNIELTPGKGGQLVRAAGTVAKIMAKEEKWATIRLPSGEFRLISKNCLATIGQVGNIDANKITLGKAGSKRWLGKRPIVRGVAMNSVDHPHGGGEGKTSIGRKKPLTPWGRTALGSKSRPMTKYSNIFILRRRKKR.

2 disordered regions span residues 36 to 56 (NKHSKKGRNNRGIITSRHRGG) and 225 to 259 (MNSVDHPHGGGEGKTSIGRKKPLTPWGRTALGSKS).

It belongs to the universal ribosomal protein uL2 family. In terms of assembly, part of the 50S ribosomal subunit.

It localises to the plastid. The protein resides in the chloroplast. The chain is Large ribosomal subunit protein uL2c (rpl2) from Psilotum nudum (Whisk fern).